The primary structure comprises 74 residues: Omwaprin-b (74 aa).

A signal peptide spans 1 to 24 (MSSGGLLLLLGLLTLWEVLTPVSS). Positions 27 to 71 (RPKKPGLCPPRPQKPCVKECKNDWSCPGQQKCCNYGCIDECRDPI) constitute a WAP domain. 4 cysteine pairs are disulfide-bonded: Cys34-Cys59, Cys42-Cys63, Cys46-Cys58, and Cys52-Cys67.

This sequence belongs to the venom waprin family. In terms of tissue distribution, expressed by the venom gland.

Its subcellular location is the secreted. In terms of biological role, damages membranes of susceptible bacteria. Has antibacterial activity against the Gram-positive bacteria B.megaterium and S.warneri. After 45 minutes of treatment with this protein, B.megaterium have no visible pili and are smooth. Has no antibacterial activity against the Gram-positive bacteria B.thuringiensis, S.aureus, S.clavuligerus and B. anthracis, or the Gram-negative bacteria E.coli and A.tumefaciens. Has no hemolytic activity. Does not inhibit the proteinases elastase and cathepsin G. Is not toxic to mice. This is Omwaprin-b from Oxyuranus microlepidotus (Inland taipan).